A 208-amino-acid chain; its full sequence is Protein JLP2 (208 aa).

Residues 185-194 are compositionally biased toward basic residues; it reads AKKNQKKKNK. A disordered region spans residues 185 to 208; sequence AKKNQKKKNKQSKDEVTDDMQLEV.

The protein belongs to the CCDC25 family.

It is found in the cytoplasm. The protein is Protein JLP2 (JLP2) of Saccharomyces cerevisiae (strain ATCC 204508 / S288c) (Baker's yeast).